The chain runs to 218 residues: Small ribosomal subunit protein uS3c (218 aa).

Residues 47-118 (VQKNMRTSSG…KLNIAVTRIA (72 aa)) form the KH type-2 domain.

Belongs to the universal ribosomal protein uS3 family. In terms of assembly, part of the 30S ribosomal subunit.

It is found in the plastid. The protein localises to the chloroplast. This is Small ribosomal subunit protein uS3c (rps3) from Atropa belladonna (Belladonna).